Consider the following 175-residue polypeptide: uncharacterized protein (175 aa).

2 disordered regions span residues 68–111 (NKSN…DDDQ) and 154–175 (PERAKRESDDEDDMFPIKKLTT). Residues 95–106 (EEQPMMPYQQPP) show a composition bias toward low complexity.

It belongs to the asfivirus H171R family.

It localises to the virion. This is an uncharacterized protein from African swine fever virus (isolate Pig/Kenya/KEN-50/1950) (ASFV).